The chain runs to 211 residues: ATP-dependent Clp protease proteolytic subunit 1 (211 aa).

Serine 107 serves as the catalytic Nucleophile. Histidine 132 is a catalytic residue.

This sequence belongs to the peptidase S14 family. Fourteen ClpP subunits assemble into 2 heptameric rings which stack back to back to give a disk-like structure with a central cavity, resembling the structure of eukaryotic proteasomes.

The protein resides in the cytoplasm. It carries out the reaction Hydrolysis of proteins to small peptides in the presence of ATP and magnesium. alpha-casein is the usual test substrate. In the absence of ATP, only oligopeptides shorter than five residues are hydrolyzed (such as succinyl-Leu-Tyr-|-NHMec, and Leu-Tyr-Leu-|-Tyr-Trp, in which cleavage of the -Tyr-|-Leu- and -Tyr-|-Trp bonds also occurs).. Cleaves peptides in various proteins in a process that requires ATP hydrolysis. Has a chymotrypsin-like activity. Plays a major role in the degradation of misfolded proteins. The protein is ATP-dependent Clp protease proteolytic subunit 1 of Mycolicibacterium paratuberculosis (strain ATCC BAA-968 / K-10) (Mycobacterium paratuberculosis).